The primary structure comprises 85 residues: Large ribosomal subunit protein bL31 (85 aa).

Residues 65–85 form a disordered region; it reads YGMGGAGKAGEDKKAGDKADA. Over residues 73–85 the composition is skewed to basic and acidic residues; that stretch reads AGEDKKAGDKADA.

It belongs to the bacterial ribosomal protein bL31 family. Type A subfamily. In terms of assembly, part of the 50S ribosomal subunit.

Functionally, binds the 23S rRNA. The sequence is that of Large ribosomal subunit protein bL31 from Synechococcus sp. (strain WH7803).